The primary structure comprises 323 residues: tRNA U34 carboxymethyltransferase (323 aa).

Residues K91, W105, K110, G130, 152–154, 181–182, M196, Y200, and R315 each bind carboxy-S-adenosyl-L-methionine; these read DPT and IE.

Belongs to the class I-like SAM-binding methyltransferase superfamily. CmoB family. In terms of assembly, homotetramer.

It carries out the reaction carboxy-S-adenosyl-L-methionine + 5-hydroxyuridine(34) in tRNA = 5-carboxymethoxyuridine(34) in tRNA + S-adenosyl-L-homocysteine + H(+). In terms of biological role, catalyzes carboxymethyl transfer from carboxy-S-adenosyl-L-methionine (Cx-SAM) to 5-hydroxyuridine (ho5U) to form 5-carboxymethoxyuridine (cmo5U) at position 34 in tRNAs. The chain is tRNA U34 carboxymethyltransferase from Escherichia fergusonii (strain ATCC 35469 / DSM 13698 / CCUG 18766 / IAM 14443 / JCM 21226 / LMG 7866 / NBRC 102419 / NCTC 12128 / CDC 0568-73).